Consider the following 457-residue polypeptide: Cysteine--tRNA ligase (457 aa).

Position 28 (Cys-28) interacts with Zn(2+). The short motif at Met-30–His-40 is the 'HIGH' region element. Positions 209, 234, and 238 each coordinate Zn(2+). The short motif at Lys-266–Ser-270 is the 'KMSKS' region element. Residue Lys-269 coordinates ATP.

The protein belongs to the class-I aminoacyl-tRNA synthetase family. As to quaternary structure, monomer. Zn(2+) serves as cofactor.

Its subcellular location is the cytoplasm. It catalyses the reaction tRNA(Cys) + L-cysteine + ATP = L-cysteinyl-tRNA(Cys) + AMP + diphosphate. The sequence is that of Cysteine--tRNA ligase from Laribacter hongkongensis (strain HLHK9).